The sequence spans 494 residues: Putative glucuronosyltransferase PGSIP7 (494 aa).

Residues 4 to 24 traverse the membrane as a helical segment; that stretch reads QRTLMFSCWVLSLLIIKTTAY. The Mn(2+) site is built by Asp-161 and Asp-163. 5 consecutive transmembrane segments (helical) span residues 316–336, 362–382, 389–409, 410–430, and 444–464; these read YSAEMPWVLTQAVFYLGIILV, AFKFVALLFILSAYIIPFFII, LIGWSLYLTGSFALSTIPINA, FLLPILPVITPWLGIFGTLLV, and LSVFGYAFCCAPFLWVSFVKI.

It belongs to the glycosyltransferase 8 family. Glycogenin subfamily. Mn(2+) is required as a cofactor.

The protein resides in the membrane. The polypeptide is Putative glucuronosyltransferase PGSIP7 (PGSIP7) (Arabidopsis thaliana (Mouse-ear cress)).